Here is a 1488-residue protein sequence, read N- to C-terminus: Chromosome partition protein MukB (1488 aa).

34–41 contacts ATP; sequence GGNGAGKS. Coiled coils occupy residues 326 to 413, 444 to 472, and 509 to 602; these read LEAD…QTRA, LDTF…QTAH, and RHLA…RRAP. The segment at 666–783 is flexible hinge; that stretch reads PGGAEDQRLN…SLPIFGRAAR (118 aa). Coiled coils occupy residues 835-923, 977-1116, and 1209-1265; these read EAEI…AKLE, EMLS…AKAG, and VEAI…LQSV.

The protein belongs to the SMC family. MukB subfamily. Homodimerization via its hinge domain. Binds to DNA via its C-terminal region. Interacts, and probably forms a ternary complex, with MukE and MukF via its C-terminal region. The complex formation is stimulated by calcium or magnesium. Interacts with tubulin-related protein FtsZ.

The protein localises to the cytoplasm. It localises to the nucleoid. In terms of biological role, plays a central role in chromosome condensation, segregation and cell cycle progression. Functions as a homodimer, which is essential for chromosome partition. Involved in negative DNA supercoiling in vivo, and by this means organize and compact chromosomes. May achieve or facilitate chromosome segregation by condensation DNA from both sides of a centrally located replisome during cell division. The chain is Chromosome partition protein MukB from Salmonella paratyphi C (strain RKS4594).